The sequence spans 66 residues: Phylloseptin-Az3 (66 aa).

The first 22 residues, 1-22 (MAFLKKSLFLVLFLGLVSLSIC), serve as a signal peptide directing secretion. A propeptide spanning residues 23–44 (EEEKRETEEEEYNQEDDDKSEE) is cleaved from the precursor. Phe-65 is modified (phenylalanine amide).

As to expression, expressed by the skin glands.

The protein localises to the secreted. Its function is as follows. Has antimicrobial activity. The protein is Phylloseptin-Az3 of Pithecopus azureus (Orange-legged monkey tree frog).